The chain runs to 143 residues: Nucleoside diphosphate kinase (143 aa).

Lysine 11, phenylalanine 59, arginine 87, threonine 93, arginine 104, and asparagine 114 together coordinate ATP. Histidine 117 functions as the Pros-phosphohistidine intermediate in the catalytic mechanism.

Belongs to the NDK family. As to quaternary structure, homotetramer. It depends on Mg(2+) as a cofactor.

Its subcellular location is the cytoplasm. It carries out the reaction a 2'-deoxyribonucleoside 5'-diphosphate + ATP = a 2'-deoxyribonucleoside 5'-triphosphate + ADP. It catalyses the reaction a ribonucleoside 5'-diphosphate + ATP = a ribonucleoside 5'-triphosphate + ADP. Its function is as follows. Major role in the synthesis of nucleoside triphosphates other than ATP. The ATP gamma phosphate is transferred to the NDP beta phosphate via a ping-pong mechanism, using a phosphorylated active-site intermediate. This chain is Nucleoside diphosphate kinase, found in Shewanella sp. (strain MR-4).